Consider the following 454-residue polypeptide: UDP-N-acetylmuramate--L-alanine ligase (454 aa).

112–118 (GTHGKTT) is an ATP binding site.

Belongs to the MurCDEF family.

It localises to the cytoplasm. It catalyses the reaction UDP-N-acetyl-alpha-D-muramate + L-alanine + ATP = UDP-N-acetyl-alpha-D-muramoyl-L-alanine + ADP + phosphate + H(+). Its pathway is cell wall biogenesis; peptidoglycan biosynthesis. In terms of biological role, cell wall formation. In Oleidesulfovibrio alaskensis (strain ATCC BAA-1058 / DSM 17464 / G20) (Desulfovibrio alaskensis), this protein is UDP-N-acetylmuramate--L-alanine ligase.